The following is a 723-amino-acid chain: Zinc finger protein 750 (723 aa).

The segment at 25–51 adopts a CCHC-type zinc-finger fold; that stretch reads YKCFQCPFTCNEKSHLFNHMKYGLCKN. Residues cysteine 27, cysteine 30, histidine 43, and cysteine 49 each contribute to the Zn(2+) site. Disordered regions lie at residues 64 to 91, 132 to 153, 359 to 427, 466 to 630, and 650 to 723; these read KCPK…SKSV, LHRA…QPAL, ASSP…SQTC, PAQA…SEEQ, and RVGD…ARVS. Residues 67–91 show a composition bias toward polar residues; it reads KSNSLDPKQTNQPDATAKPASSKSV. Residues 360 to 369 are compositionally biased toward polar residues; sequence SSPSRLNPSD. Over residues 370–397 the composition is skewed to basic and acidic residues; sequence PNRKHVEFESPIPEAKDSSKAGQRDTEG. Residues 470–482 show a composition bias toward polar residues; it reads AETTAESPVSLNV. Residues 500–509 show a composition bias toward low complexity; the sequence is AAPSSPDDSS. Over residues 530 to 545 the composition is skewed to polar residues; the sequence is PTYQGSPQAETASFSE. Low complexity-rich tracts occupy residues 563–582 and 606–616; these read APRP…AAVP and GDGAPPTGPGE. Residues 666–678 are compositionally biased toward polar residues; that stretch reads DTPTLSSMESQEA.

In terms of tissue distribution, expressed in the skin, prostate, lung, placenta and thymus, and at low level in T-cells. Not expressed in peripheral blood leukocytes, pancreas and brain. Clearly expressed in primary keratinocytes but not in fibroblasts.

The protein resides in the nucleus. Transcription factor involved in epidermis differentiation. Required for terminal epidermal differentiation: acts downstream of p63/TP63 and activates expression of late epidermal differentiation genes. Specifically binds to the promoter of KLF4 and promotes its expression. This chain is Zinc finger protein 750 (ZNF750), found in Homo sapiens (Human).